A 77-amino-acid chain; its full sequence is Spermatid-specific protein T2 (77 aa).

The interval 1 to 21 is hydrophobic; the sequence is MKVAANTSKMLVEKLDLLKGG. The disordered stretch occupies residues 1-77; the sequence is MKVAANTSKM…YSRRRYRRRR (77 aa). Residues 20-77 show a composition bias toward basic residues; the sequence is GGRRRRRRSRRRRRSRRRRSRSPYRRRYRRRRRRRRSRRRRRYRRRRSYSRRRYRRRR.

Post-translationally, phosphorylation occurs at different degrees. The triphosphorylated form may be predominant in T2. SP2 appears to be phosphorylated in elongated spermatids, but dephosphorylated in mature sperm cells. In terms of tissue distribution, testis.

It localises to the nucleus. The protein resides in the chromosome. In terms of biological role, cuttlefish spermiogenesis is characterized by a double nuclear protein transition: histones -&gt; spermatid-specific proteins (T1/T2) -&gt; protamines (SP1/SP2). The protamines compact sperm DNA into a highly condensed, stable and inactive complex. The protein is Spermatid-specific protein T2 of Sepia officinalis (Common cuttlefish).